We begin with the raw amino-acid sequence, 361 residues long: Porphobilinogen deaminase (361 aa).

An N-acetylserine modification is found at serine 2. Serine 69 carries the post-translational modification Phosphoserine. Lysine 74 bears the N6-acetyllysine mark. At serine 147 the chain carries Phosphoserine. Cysteine 261 is subject to S-(dipyrrolylmethanemethyl)cysteine.

It belongs to the HMBS family. Monomer. Dipyrromethane serves as cofactor.

It is found in the cytoplasm. It localises to the cytosol. It catalyses the reaction 4 porphobilinogen + H2O = hydroxymethylbilane + 4 NH4(+). Its pathway is porphyrin-containing compound metabolism; protoporphyrin-IX biosynthesis; coproporphyrinogen-III from 5-aminolevulinate: step 2/4. As part of the heme biosynthetic pathway, catalyzes the sequential polymerization of four molecules of porphobilinogen to form hydroxymethylbilane, also known as preuroporphyrinogen. Catalysis begins with the assembly of the dipyrromethane cofactor by the apoenzyme from two molecules of porphobilinogen or from preuroporphyrinogen. The covalently linked cofactor acts as a primer, around which the tetrapyrrole product is assembled. In the last step of catalysis, the product, preuroporphyrinogen, is released, leaving the cofactor bound to the holodeaminase intact. In Bos taurus (Bovine), this protein is Porphobilinogen deaminase (HMBS).